The following is a 192-amino-acid chain: Ion-translocating oxidoreductase complex subunit B (192 aa).

The tract at residues 1–26 (MNTIWIAVAAISLLGLAFGAILGYAS) is hydrophobic. The 4Fe-4S domain maps to 32-91 (EDDPVVEKIDEILPQSQCGQCGYPGCRPYAEAISCNGEKINRCAPGGEAVMLKISELLNV). Positions 49, 52, 57, 74, 117, 120, 123, 127, 147, 150, 153, and 157 each coordinate [4Fe-4S] cluster. 4Fe-4S ferredoxin-type domains lie at 108-137 (VVAVIDENNCIGCTKCIQACPVDAIVGATR) and 138-167 (AMHTVMSDLCTGCNLCVDPCPTQCISLQPV).

This sequence belongs to the 4Fe4S bacterial-type ferredoxin family. RnfB subfamily. The complex is composed of six subunits: RsxA, RsxB, RsxC, RsxD, RsxE and RsxG. [4Fe-4S] cluster is required as a cofactor.

It is found in the cell inner membrane. In terms of biological role, part of a membrane-bound complex that couples electron transfer with translocation of ions across the membrane. Required to maintain the reduced state of SoxR. The protein is Ion-translocating oxidoreductase complex subunit B of Escherichia fergusonii (strain ATCC 35469 / DSM 13698 / CCUG 18766 / IAM 14443 / JCM 21226 / LMG 7866 / NBRC 102419 / NCTC 12128 / CDC 0568-73).